A 600-amino-acid polypeptide reads, in one-letter code: Torsin-1A-interacting protein 1 (600 aa).

The span at 1–14 shows a compositional bias: basic and acidic residues; it reads MAGEGQRAEPEREG. Disordered regions lie at residues 1–261 and 310–346; these read MAGE…YKES and MRSIYGSFSDDDSVQKSELGNQSPSTSNQQMTGQPKS. The Nuclear portion of the chain corresponds to 1-354; the sequence is MAGEGQRAEP…KSVSSVKTKR (354 aa). Ser-61 is modified (phosphoserine). Basic and acidic residues-rich tracts occupy residues 71 to 81, 91 to 102, and 116 to 125; these read FEPRAAKEKAR, FRPDSAKEEVRE, and RLHEAEEMQT. 6 positions are modified to phosphoserine: Ser-137, Ser-145, Ser-156, Ser-158, Ser-159, and Ser-189. Residues 192–203 show a composition bias toward low complexity; that stretch reads PLISLRRPPLRS. Residues 219 to 232 show a composition bias toward acidic residues; the sequence is EEGETEENDQDSFD. Thr-223 carries the phosphothreonine modification. A phosphoserine mark is found at Ser-230, Ser-233, and Ser-244. Polar residues predominate over residues 247 to 261; the sequence is SGDQTTRSSSQYKES. Ser-322 is modified (phosphoserine). Residue Lys-325 forms a Glycyl lysine isopeptide (Lys-Gly) (interchain with G-Cter in SUMO2) linkage. Over residues 325–346 the composition is skewed to polar residues; that stretch reads KSELGNQSPSTSNQQMTGQPKS. Ser-332 carries the post-translational modification Phosphoserine. The helical transmembrane segment at 355–371 threads the bilayer; that stretch reads YWPFAVIAALLIGGFLY. The Perinuclear space portion of the chain corresponds to 372 to 600; that stretch reads TRPPEAETTA…ENDLKKGICL (229 aa). The tract at residues 373 to 600 is interaction with TOR1A; it reads RPPEAETTAV…ENDLKKGICL (228 aa). Residues 376–452 adopt a coiled-coil conformation; it reads EAETTAVQEF…SEQIADAYSS (77 aa). Asn-416 carries N-linked (GlcNAc...) asparagine glycosylation.

It belongs to the TOR1AIP family. In terms of assembly, interacts with ATP1B4. Interacts with TOR1A (ATP-bound). Interacts with TOR1B, TOR2A and TOR3A. Interacts with VIM.

The protein resides in the nucleus inner membrane. Required for nuclear membrane integrity. Induces TOR1A and TOR1B ATPase activity and is required for their location on the nuclear membrane. Binds to A- and B-type lamins. Possible role in membrane attachment and assembly of the nuclear lamina. This is Torsin-1A-interacting protein 1 (TOR1AIP1) from Bos taurus (Bovine).